Here is a 387-residue protein sequence, read N- to C-terminus: 3-ketoacyl-CoA thiolase (387 aa).

The Acyl-thioester intermediate role is filled by Cys-91. Catalysis depends on proton acceptor residues His-343 and Cys-373.

Belongs to the thiolase-like superfamily. Thiolase family. In terms of assembly, heterotetramer of two alpha chains (FadB) and two beta chains (FadA).

The protein resides in the cytoplasm. It carries out the reaction an acyl-CoA + acetyl-CoA = a 3-oxoacyl-CoA + CoA. It functions in the pathway lipid metabolism; fatty acid beta-oxidation. Its function is as follows. Catalyzes the final step of fatty acid oxidation in which acetyl-CoA is released and the CoA ester of a fatty acid two carbons shorter is formed. The polypeptide is 3-ketoacyl-CoA thiolase (Shewanella sp. (strain W3-18-1)).